A 362-amino-acid chain; its full sequence is Oxygen-dependent coproporphyrinogen-III oxidase (362 aa).

Position 118 (S118) interacts with substrate. 2 residues coordinate a divalent metal cation: H122 and H132. H132 (proton donor) is an active-site residue. A substrate-binding site is contributed by 134-136 (NYR). The a divalent metal cation site is built by H166 and H196. The important for dimerization stretch occupies residues 286–321 (YVEFNLVWDRGTIFGLQTNGRTESILMSLPPLVRWE).

It belongs to the aerobic coproporphyrinogen-III oxidase family. As to quaternary structure, homodimer. A divalent metal cation is required as a cofactor.

The protein localises to the cytoplasm. It carries out the reaction coproporphyrinogen III + O2 + 2 H(+) = protoporphyrinogen IX + 2 CO2 + 2 H2O. It participates in porphyrin-containing compound metabolism; protoporphyrin-IX biosynthesis; protoporphyrinogen-IX from coproporphyrinogen-III (O2 route): step 1/1. Involved in the heme and chlorophyll biosynthesis. Catalyzes the aerobic oxidative decarboxylation of propionate groups of rings A and B of coproporphyrinogen-III to yield the vinyl groups in protoporphyrinogen-IX. This Synechococcus sp. (strain CC9605) protein is Oxygen-dependent coproporphyrinogen-III oxidase.